The sequence spans 151 residues: S-ribosylhomocysteine lyase (151 aa).

The Fe cation site is built by histidine 54, histidine 58, and cysteine 121.

It belongs to the LuxS family. In terms of assembly, homodimer. Requires Fe cation as cofactor.

The enzyme catalyses S-(5-deoxy-D-ribos-5-yl)-L-homocysteine = (S)-4,5-dihydroxypentane-2,3-dione + L-homocysteine. Its function is as follows. Involved in the synthesis of autoinducer 2 (AI-2) which is secreted by bacteria and is used to communicate both the cell density and the metabolic potential of the environment. The regulation of gene expression in response to changes in cell density is called quorum sensing. Catalyzes the transformation of S-ribosylhomocysteine (RHC) to homocysteine (HC) and 4,5-dihydroxy-2,3-pentadione (DPD). In Clostridium perfringens (strain ATCC 13124 / DSM 756 / JCM 1290 / NCIMB 6125 / NCTC 8237 / Type A), this protein is S-ribosylhomocysteine lyase.